Consider the following 880-residue polypeptide: Leucine-rich repeat-containing protein 66 (880 aa).

The helical transmembrane segment at 4 to 24 threads the bilayer; it reads LYFRVITIVIGLYFTGIMTNA. A glycan (N-linked (GlcNAc...) asparagine) is linked at N45. LRR repeat units follow at residues 86–107, 110–130, 149–171, 172–193, 196–217, and 220–241; these read KIKH…PFAY, ALEV…DLLS, LLKV…WKLK, SLQS…DFHN, QLEN…AFKD, and KLQV…MIIA. A glycan (N-linked (GlcNAc...) asparagine) is linked at N115. The interval 319–368 is disordered; the sequence is SKAERPQGGRHTGISTLGKKAKAGSGLRKKQRRLPRSVRSTRDVQAAGKK. Basic residues predominate over residues 337–354; that stretch reads KKAKAGSGLRKKQRRLPR. The chain crosses the membrane as a helical span at residues 376–396; the sequence is ALAVCLSVFITFLVAFSLGAF. Disordered regions lie at residues 463-504 and 679-746; these read PHPH…NDGA and VTPA…SKDN. Over residues 483 to 493 the composition is skewed to polar residues; the sequence is GSSQSPGQCGD. Acidic residues predominate over residues 697-707; the sequence is CELESDCDSDE. Low complexity predominate over residues 709–720; that stretch reads SLFTLSSISSES. S723 is modified (phosphoserine). Residues 737–746 are compositionally biased toward polar residues; sequence DESSGASKDN. N-linked (GlcNAc...) asparagine glycosylation is present at N746. S752 carries the post-translational modification Phosphoserine. Residue N756 is glycosylated (N-linked (GlcNAc...) asparagine). Disordered regions lie at residues 764-816 and 855-880; these read GKCK…PLGD and TPPC…DILK. Basic and acidic residues-rich tracts occupy residues 788 to 800 and 865 to 880; these read THLE…DRSE and DPDK…DILK.

It localises to the membrane. This chain is Leucine-rich repeat-containing protein 66 (LRRC66), found in Homo sapiens (Human).